We begin with the raw amino-acid sequence, 210 residues long: Calcium-activated potassium channel subunit beta-4 (210 aa).

Over 1–19 the chain is Cytoplasmic; it reads MAKLRVSYEYTEAEDKSIR. A helical transmembrane segment spans residues 20-40; the sequence is LGLFLIVSGILSLFIFGFCWL. Residues 41–167 lie on the Extracellular side of the membrane; the sequence is SPALQDLQAT…DVLLQRTHDE (127 aa). 2 N-linked (GlcNAc...) asparagine glycosylation sites follow: N53 and N90. Residues 168 to 188 form a helical membrane-spanning segment; sequence IVLLHCFLWPVVAFVVGVLIV. Over 189–210 the chain is Cytoplasmic; that stretch reads VLTICAKSLAVKAEAMKKRKFS.

It belongs to the KCNMB (TC 8.A.14.1) family. KCNMB4 subfamily. In terms of assembly, interacts with KCNMA1 tetramer. There are probably 4 molecules of KCMNB4 per KCNMA1 tetramer. Interacts with FMR1 (via N-terminus). In terms of processing, phosphorylated. Phosphorylation modulates its effect on KCNMA1 activation kinetics. Post-translationally, N-glycosylated. A highly glycosylated form is promoted by KCNMA1. Glycosylation, which is not required for the interaction with KCNMA1 and subcellular location, increases protection against charybdotoxin.

Its subcellular location is the membrane. Its function is as follows. Regulatory subunit of the calcium activated potassium KCNMA1 (maxiK) channel. Modulates the calcium sensitivity and gating kinetics of KCNMA1, thereby contributing to KCNMA1 channel diversity. Decreases the gating kinetics and calcium sensitivity of the KCNMA1 channel, but with fast deactivation kinetics. May decrease KCNMA1 channel openings at low calcium concentrations but increases channel openings at high calcium concentrations. Makes KCNMA1 channel resistant to 100 nM charybdotoxin (CTX) toxin concentrations. This Rattus norvegicus (Rat) protein is Calcium-activated potassium channel subunit beta-4 (Kcnmb4).